Consider the following 559-residue polypeptide: Formate--tetrahydrofolate ligase (559 aa).

68–75 (TPAGEGKS) contacts ATP.

It belongs to the formate--tetrahydrofolate ligase family.

It carries out the reaction (6S)-5,6,7,8-tetrahydrofolate + formate + ATP = (6R)-10-formyltetrahydrofolate + ADP + phosphate. The protein operates within one-carbon metabolism; tetrahydrofolate interconversion. The polypeptide is Formate--tetrahydrofolate ligase (Clostridium tetani (strain Massachusetts / E88)).